The chain runs to 451 residues: Gamma-aminobutyric acid receptor subunit alpha-2 (451 aa).

The first 28 residues, 1-28 (MRTKLSTCNVWFPLLVLLVWNPARLVLA), serve as a signal peptide directing secretion. The Extracellular segment spans residues 29–249 (NIQEDEAKNN…MTAHFHLKRK (221 aa)). N38 carries an N-linked (GlcNAc...) asparagine glycan. Residue R94 participates in 4-aminobutanoate binding. N114 and N138 each carry an N-linked (GlcNAc...) asparagine glycan. T157 lines the 4-aminobutanoate pocket. Residues C166 and C180 are joined by a disulfide bond. A run of 3 helical transmembrane segments spans residues 250–270 (IGYF…LSQV), 281–300 (ARTV…SISA), and 312–332 (AMDW…IEFA). At 333-420 (TVNYFTKRGW…FNSVSKIDRM (88 aa)) the chain is on the cytoplasmic side. A disordered region spans residues 389–408 (KSATTPEPNKKPENKPAEAK). The segment covering 396-408 (PNKKPENKPAEAK) has biased composition (basic and acidic residues). The helical transmembrane segment at 421-441 (SRIVFPVLFGTFNLVYWATYL) threads the bilayer. The Extracellular segment spans residues 442 to 451 (NREPVLGVSP).

Belongs to the ligand-gated ion channel (TC 1.A.9) family. Gamma-aminobutyric acid receptor (TC 1.A.9.5) subfamily. GABRA2 sub-subfamily. In terms of assembly, heteropentamer, formed by a combination of alpha (GABRA1-6), beta (GABRB1-3), gamma (GABRG1-3), delta (GABRD), epsilon (GABRE), rho (GABRR1-3), pi (GABRP) and theta (GABRQ) subunits, each subunit exhibiting distinct physiological and pharmacological properties. Binds UBQLN1. Interacts with KIF21B. Interacts with LHFPL4. Interacts with SHISA7; interaction leads to the regulation of GABA(A) receptor trafficking, channel deactivation kinetics and pharmacology. In terms of processing, glycosylated. In terms of tissue distribution, expressed in brain (at protein level).

The protein localises to the postsynaptic cell membrane. The protein resides in the cell membrane. It is found in the cytoplasmic vesicle membrane. It localises to the cell projection. Its subcellular location is the dendrite. It catalyses the reaction chloride(in) = chloride(out). With respect to regulation, activated by pentobarbital. Inhibited by the antagonist bicuculline. In terms of biological role, alpha subunit of the heteropentameric ligand-gated chloride channel gated by gamma-aminobutyric acid (GABA), a major inhibitory neurotransmitter in the brain. GABA-gated chloride channels, also named GABA(A) receptors (GABAAR), consist of five subunits arranged around a central pore and contain GABA active binding site(s) located at the alpha and beta subunit interface(s). When activated by GABA, GABAARs selectively allow the flow of chloride anions across the cell membrane down their electrochemical gradient. Chloride influx into the postsynaptic neuron following GABAAR opening decreases the neuron ability to generate a new action potential, thereby reducing nerve transmission. The alpha-2 subunit exhibits synaptogenic activity together with beta-2 and very little to no activity together with beta-3, the gamma-2 subunit being necessary but not sufficient to induce rapid synaptic contacts formation. The sequence is that of Gamma-aminobutyric acid receptor subunit alpha-2 from Rattus norvegicus (Rat).